Consider the following 661-residue polypeptide: Transketolase (661 aa).

N-acetylserine is present on Ser2. Position 31 (His31) interacts with substrate. Residues His71 and 119–121 (GPL) contribute to the thiamine diphosphate site. Residue Asp160 participates in Mg(2+) binding. The thiamine diphosphate site is built by Gly161 and Asn190. Residues Asn190 and Val192 each coordinate Mg(2+). Residues His267, Arg359, and Ser386 each coordinate substrate. His267 is a thiamine diphosphate binding site. The active-site Proton donor is Glu413. Phe439 contributes to the thiamine diphosphate binding site. Residues His463, Asp471, and Arg522 each coordinate substrate.

This sequence belongs to the transketolase family. In terms of assembly, homodimer. Mg(2+) is required as a cofactor. It depends on Ca(2+) as a cofactor. Requires Mn(2+) as cofactor. Co(2+) serves as cofactor. The cofactor is thiamine diphosphate.

The catalysed reaction is D-sedoheptulose 7-phosphate + D-glyceraldehyde 3-phosphate = aldehydo-D-ribose 5-phosphate + D-xylulose 5-phosphate. Its function is as follows. Catalyzes the transfer of a two-carbon ketol group from a ketose donor to an aldose acceptor, via a covalent intermediate with the cofactor thiamine pyrophosphate. This chain is Transketolase (tkt-1), found in Dictyostelium discoideum (Social amoeba).